Reading from the N-terminus, the 200-residue chain is Sperm acrosome developmental regulator (200 aa).

A Phosphoserine modification is found at Ser63. The span at 167-183 (QERRRRRRMRSHASHTS) shows a compositional bias: basic residues. A disordered region spans residues 167 to 200 (QERRRRRRMRSHASHTSRHSESVQGLKHDARSPL). The segment covering 184 to 200 (RHSESVQGLKHDARSPL) has biased composition (basic and acidic residues).

The protein localises to the cytoplasmic vesicle. The protein resides in the secretory vesicle. It localises to the acrosome. Its function is as follows. May play an important role in acrosome formation and nucleus shaping during spermiogenesis. In Rattus norvegicus (Rat), this protein is Sperm acrosome developmental regulator (Spacdr).